We begin with the raw amino-acid sequence, 152 residues long: Transcriptional repressor NrdR (152 aa).

A zinc finger lies at 3–34 (CPFCGHADTQVVDSRVSEDGASIRRRRRCLEC). An ATP-cone domain is found at 49-139 (PQVVKQDGHR…VYRSFQDVAE (91 aa)).

The protein belongs to the NrdR family. Requires Zn(2+) as cofactor.

In terms of biological role, negatively regulates transcription of bacterial ribonucleotide reductase nrd genes and operons by binding to NrdR-boxes. In Laribacter hongkongensis (strain HLHK9), this protein is Transcriptional repressor NrdR.